A 970-amino-acid chain; its full sequence is MKLEHPDRLMNRTPLSLAALETHDAFAERHIGPDAASQQAMLDTLGFATRAALIDAVIPASIRRAETLPLGPFAQPKSEAEALAALRALADKNQVFRSYIGQGYYDTHTPAVILRNVLENPAWYTAYTPYQPEISQGRLEALLNFQQMVADLTGLEISNASLLDEATAAAEAMTLLQRVGKPQSNVFYVADDVLPQTLEVIKTRAKPIGIEVKSGPAADAAAANAFGVLLQYPGANGDVRDYRALADAIHAAGGHVVVAADILALTVLMPPGEWGADVAVGNTQRFGVPMGFGGPHAAYMAVRDEFKRQMPGRLVGVTVDAQGKPALRLALQTREQHIRREKATSNVCTAQALLAIMASMYAVYHGPRGLKTIALRVNRIAALLAAGIRHLGYATVNDTFFDTLTIDTGARTAQLHAFAQAKRINLRRAGDTRVGVSVDETTTRADLADLLTIFAQAAGATAPDIDALDAGLLPAPALPPSLERTSAYLTHHVFNRHHSETEMLRYLRSLSDKDLALDRSMIPLGSCTMKLNATSEMLPVTWPEFGRIHPFAPAEQTVGYREMIDQLEQMLVAATGYAAVSLQPNAGSQGEYAGLLIIHAYHESRGESHRDVCLIPASAHGTNPASAHMAGMKVVVVACDAQGNVDIADLKAKADAHSHDLAAIMITYPSTHGVFEQNVREICEIVHAHGGQVYVDGANMNAMVGLTAPGQFGGDVSHLNLHKTFCIPHGGGGPGVGPHLAKFLPNQRSTGYARGEDGIGAVSAAPYGSASILPISWMYIAMMGAKNLTAATETAILNANYIAKRLAPHYPVLYSGPGGLVAHECILDLRPIKDSSGITVDDVAKRLMDYGFHAPTMSFPVPGTLMVEPTESESQEELDRFIAAMIAIRDEIRAVEEGRADREDNPLRHAPHTAAVVTANEWPHAYSREQAAFPVASLVANKYWPPVGRADNAYGDRNLFCSCVPVSDYA.

Position 723 is an N6-(pyridoxal phosphate)lysine (Lys-723).

It belongs to the GcvP family. The glycine cleavage system is composed of four proteins: P, T, L and H. Pyridoxal 5'-phosphate serves as cofactor.

It catalyses the reaction N(6)-[(R)-lipoyl]-L-lysyl-[glycine-cleavage complex H protein] + glycine + H(+) = N(6)-[(R)-S(8)-aminomethyldihydrolipoyl]-L-lysyl-[glycine-cleavage complex H protein] + CO2. Its function is as follows. The glycine cleavage system catalyzes the degradation of glycine. The P protein binds the alpha-amino group of glycine through its pyridoxal phosphate cofactor; CO(2) is released and the remaining methylamine moiety is then transferred to the lipoamide cofactor of the H protein. This is Glycine dehydrogenase (decarboxylating) from Burkholderia pseudomallei (strain 1106a).